The primary structure comprises 75 residues: Exodeoxyribonuclease 7 small subunit (75 aa).

The protein belongs to the XseB family. As to quaternary structure, heterooligomer composed of large and small subunits.

It is found in the cytoplasm. The enzyme catalyses Exonucleolytic cleavage in either 5'- to 3'- or 3'- to 5'-direction to yield nucleoside 5'-phosphates.. Bidirectionally degrades single-stranded DNA into large acid-insoluble oligonucleotides, which are then degraded further into small acid-soluble oligonucleotides. This Nostoc punctiforme (strain ATCC 29133 / PCC 73102) protein is Exodeoxyribonuclease 7 small subunit.